The primary structure comprises 647 residues: Acetyl-coenzyme A synthetase (647 aa).

CoA is bound by residues 190 to 193 (RGGR) and threonine 310. Residues 386–388 (GEP), 410–415 (DTWWQT), aspartate 499, and arginine 514 each bind ATP. Residue serine 522 participates in CoA binding. Arginine 525 contacts ATP. Valine 536, histidine 538, and valine 541 together coordinate Mg(2+). Arginine 583 is a CoA binding site. Lysine 608 bears the N6-acetyllysine mark.

Belongs to the ATP-dependent AMP-binding enzyme family. It depends on Mg(2+) as a cofactor. Post-translationally, acetylated. Deacetylation by the SIR2-homolog deacetylase activates the enzyme.

It carries out the reaction acetate + ATP + CoA = acetyl-CoA + AMP + diphosphate. Its function is as follows. Catalyzes the conversion of acetate into acetyl-CoA (AcCoA), an essential intermediate at the junction of anabolic and catabolic pathways. AcsA undergoes a two-step reaction. In the first half reaction, AcsA combines acetate with ATP to form acetyl-adenylate (AcAMP) intermediate. In the second half reaction, it can then transfer the acetyl group from AcAMP to the sulfhydryl group of CoA, forming the product AcCoA. This is Acetyl-coenzyme A synthetase from Xylella fastidiosa (strain Temecula1 / ATCC 700964).